A 171-amino-acid chain; its full sequence is Ribosome maturation factor RimM (171 aa).

The region spanning 93 to 167 (DGVYYYKDIF…KVYVELMEGL (75 aa)) is the PRC barrel domain.

Belongs to the RimM family. Binds ribosomal protein uS19.

The protein localises to the cytoplasm. In terms of biological role, an accessory protein needed during the final step in the assembly of 30S ribosomal subunit, possibly for assembly of the head region. Essential for efficient processing of 16S rRNA. May be needed both before and after RbfA during the maturation of 16S rRNA. It has affinity for free ribosomal 30S subunits but not for 70S ribosomes. This is Ribosome maturation factor RimM from Lactobacillus helveticus (strain DPC 4571).